Here is a 277-residue protein sequence, read N- to C-terminus: MAISTIQIILIFIWSSVVGMGSVLDEFQTHRPLIACSIMGLILGDPKTGIILGGTLELIALGWMNIGAAQSPDSALASTISTILVIVGNQDIQKGIAIALPVAAAGQVLTVLARTVTVAFQHAADREAEKANFTAIIWLHFTALIVQALRVSIPTTIVAVFVSPEEIKSMLDALPEVITGGLAVAGGFIVVVGYAMILNMMSVKYLMPFFYQGFVLGGYLKLSLLAWGAVGLIFAIVYVQLNPKFATNHNNGTGGSGGTVAAAGDHPAALPEDELDD.

5 helical membrane-spanning segments follow: residues 1 to 21 (MAIS…VGMG), 92 to 112 (IQKG…LTVL), 133 to 153 (FTAI…RVSI), 177 to 197 (VITG…YAMI), and 219 to 239 (YLKL…IVYV). Residues 3–237 (ISTIQIILIF…GAVGLIFAIV (235 aa)) enclose the PTS EIIC type-4 domain.

It is found in the cell membrane. In terms of biological role, the phosphoenolpyruvate-dependent sugar phosphotransferase system (PTS), a major carbohydrate active transport system, catalyzes the phosphorylation of incoming sugar substrates concomitant with their translocation across the cell membrane. The enzyme II SorABCD PTS system is involved in L-sorbose transport. In Lacticaseibacillus casei (Lactobacillus casei), this protein is PTS system sorbose-specific EIIC component.